A 459-amino-acid polypeptide reads, in one-letter code: NADP-specific glutamate dehydrogenase (459 aa).

Residue lysine 116 is part of the active site.

Belongs to the Glu/Leu/Phe/Val dehydrogenases family. Homohexamer.

It carries out the reaction L-glutamate + NADP(+) + H2O = 2-oxoglutarate + NH4(+) + NADPH + H(+). This is NADP-specific glutamate dehydrogenase (GDHA) from Schwanniomyces occidentalis (Yeast).